Reading from the N-terminus, the 270-residue chain is Formamidopyrimidine-DNA glycosylase (270 aa).

Catalysis depends on P2, which acts as the Schiff-base intermediate with DNA. E3 serves as the catalytic Proton donor. The Proton donor; for beta-elimination activity role is filled by K58. Residues H91, R109, and R151 each contribute to the DNA site. The segment at 236 to 270 (LVYGRGGEACKTCQKPLKEIRMNDRTTVYCVTCQQ) adopts an FPG-type zinc-finger fold. R260 functions as the Proton donor; for delta-elimination activity in the catalytic mechanism.

The protein belongs to the FPG family. In terms of assembly, monomer. Requires Zn(2+) as cofactor.

The catalysed reaction is Hydrolysis of DNA containing ring-opened 7-methylguanine residues, releasing 2,6-diamino-4-hydroxy-5-(N-methyl)formamidopyrimidine.. The enzyme catalyses 2'-deoxyribonucleotide-(2'-deoxyribose 5'-phosphate)-2'-deoxyribonucleotide-DNA = a 3'-end 2'-deoxyribonucleotide-(2,3-dehydro-2,3-deoxyribose 5'-phosphate)-DNA + a 5'-end 5'-phospho-2'-deoxyribonucleoside-DNA + H(+). Its function is as follows. Involved in base excision repair of DNA damaged by oxidation or by mutagenic agents. Acts as a DNA glycosylase that recognizes and removes damaged bases. Has a preference for oxidized purines, such as 7,8-dihydro-8-oxoguanine (8-oxoG). Has AP (apurinic/apyrimidinic) lyase activity and introduces nicks in the DNA strand. Cleaves the DNA backbone by beta-delta elimination to generate a single-strand break at the site of the removed base with both 3'- and 5'-phosphates. The chain is Formamidopyrimidine-DNA glycosylase from Cellvibrio japonicus (strain Ueda107) (Pseudomonas fluorescens subsp. cellulosa).